Here is a 205-residue protein sequence, read N- to C-terminus: Large ribosomal subunit protein uL4 (205 aa).

Residues 43 to 60 (ARSGNRAQQTRAEVSAST) show a composition bias toward polar residues. Residues 43–96 (ARSGNRAQQTRAEVSASTHKPWRQKGTGRARSGRASSPIWRGGGVTFPNKPNEN) form a disordered region. Residues 62-74 (KPWRQKGTGRARS) show a composition bias toward basic residues.

It belongs to the universal ribosomal protein uL4 family. In terms of assembly, part of the 50S ribosomal subunit.

Functionally, one of the primary rRNA binding proteins, this protein initially binds near the 5'-end of the 23S rRNA. It is important during the early stages of 50S assembly. It makes multiple contacts with different domains of the 23S rRNA in the assembled 50S subunit and ribosome. In terms of biological role, forms part of the polypeptide exit tunnel. This Thiobacillus denitrificans (strain ATCC 25259 / T1) protein is Large ribosomal subunit protein uL4.